The chain runs to 131 residues: Fluoride-specific ion channel FluC (131 aa).

The next 4 helical transmembrane spans lie at 10 to 30 (AAVA…SGLV), 36 to 56 (FPMG…FLTW), 71 to 91 (LATV…YETV), and 99 to 119 (VLSI…VLGG). Residues G78 and T81 each contribute to the Na(+) site.

Belongs to the fluoride channel Fluc/FEX (TC 1.A.43) family.

It is found in the cell membrane. The catalysed reaction is fluoride(in) = fluoride(out). Its activity is regulated as follows. Na(+) is not transported, but it plays an essential structural role and its presence is essential for fluoride channel function. In terms of biological role, fluoride-specific ion channel. Important for reducing fluoride concentration in the cell, thus reducing its toxicity. This Methanopyrus kandleri (strain AV19 / DSM 6324 / JCM 9639 / NBRC 100938) protein is Fluoride-specific ion channel FluC.